The primary structure comprises 369 residues: MWCLERLRLGPECLRRSGDWLLPGRARGAKSRTTAACANVLTPDRIPEFCIPPRLMPRLALAALRNSWVEEAGMDEGAGRTDWDPRSQAALSLPHLPRVRTAYGFCALLESPHTRRKESLLLGGPPAPRPRAHTYGGGGGPDALLGTLRVPRAPGPATPAAPGCPRPPQDALARRPRGCRLLRVPDGLLSRALRAGRSRRLTRVRSVSSGNEDKERRAGSQSPARAPSTSPPSSRVPFPERLEAEGTVALGRAGDALRLAAEYCPGTGRLRLRLLRAESPAGGAPGPRAVSCRLSLVLRPPGTALRQCSTVVGRSRKASFDQDFCFDGLSEDEVRRLAVRVKARDEGRGRERGRLLGQGELSLGALLLL.

Disordered stretches follow at residues Pro-151 to Pro-176 and Arg-197 to Glu-240. Pro residues predominate over residues Ala-153–Pro-168. Residues Ser-220–Pro-237 are compositionally biased toward low complexity. Positions Ala-253 to Leu-369 constitute a C2 domain.

It belongs to the C2CD4 family. As to expression, specifically expressed in endothelial cells.

Its subcellular location is the nucleus. Functionally, may be involved in inflammatory process. May regulate cell architecture and adhesion. The sequence is that of C2 calcium-dependent domain-containing protein 4A (C2CD4A) from Homo sapiens (Human).